The following is a 168-amino-acid chain: Coiled-coil domain-containing protein 200 (168 aa).

Positions 16 to 50 (LDRRRWLMAQQQQELQQKEQELKNHQEEEQQSEEK) form a coiled coil. A disordered region spans residues 23-168 (MAQQQQELQQ…LKSTNYIQQW (146 aa)). Positions 31 to 52 (QQKEQELKNHQEEEQQSEEKLQ) are enriched in basic and acidic residues. Residues 70–82 (SQEQPQPSQQQPS) are compositionally biased toward low complexity. 2 stretches are compositionally biased toward pro residues: residues 83-94 (VQPPSQPPPQPS) and 104-117 (GPQPPQPQPPPQPT). 2 stretches are compositionally biased toward polar residues: residues 124-138 (RCTQHTSKCNLQDSQ) and 145-168 (PCQSSPIRNTGYSQLKSTNYIQQW).

The polypeptide is Coiled-coil domain-containing protein 200 (Homo sapiens (Human)).